Here is a 109-residue protein sequence, read N- to C-terminus: Large ribosomal subunit protein uL23 (109 aa).

This sequence belongs to the universal ribosomal protein uL23 family. As to quaternary structure, part of the 50S ribosomal subunit. Contacts protein L29, and trigger factor when it is bound to the ribosome.

Its function is as follows. One of the early assembly proteins it binds 23S rRNA. One of the proteins that surrounds the polypeptide exit tunnel on the outside of the ribosome. Forms the main docking site for trigger factor binding to the ribosome. The protein is Large ribosomal subunit protein uL23 of Aquifex pyrophilus.